A 549-amino-acid chain; its full sequence is MSSVLKAFERFTIEQELQDRGEEGSIPPETLKSAVKVFVINTPNPTTRYHMLNFCLRIICSQNARASHRVGALITLFSLPSAGMQNHIRLADRSPEAQIERCEIDGFEPGTYRLIPNARANLTANEIAAYALLADDLPPTINNGTPYVHADVEGQPCDEIEQFLDRCYSVLIQAWVMVCKCMTAYDQPAGSADRRFAKYQQQGRLEARYMLQPEAQRLIQTAIRKSLVVRQYLTFELQLARRQGLLSNRYYAMVGDIGKYIENSGLTAFFLTLKYALGTKWSPLSLAAFTGELTKLRSLMMLYRDLGEQARYLALLEAPQIMDFAPGGYPLIFSYAMGVGTVLDVQMRNYTYARPFLNGYYFQIGVETARRQQGTVDNRVADDLGLTPEQRTEVTQLIDRLARGRGAGIPGGPVNPFVPPVQQQQPAAAYEDIPALEESDDDGDEDGGAGFQNGAQAPAARQGGQNDFRVQPLQDPIQAQLFMPLYPQVSNIPNHQNHQINRIGGMEHQDLLRYNENGDSQQDARGEHGNTFPNNPNQNAQSQVGDWDE.

A p protein-binding region spans residues 1-398 (MSSVLKAFER…EQRTEVTQLI (398 aa)). A ncore region spans residues 1 to 404 (MSSVLKAFER…TQLIDRLARG (404 aa)). Lys-180, Arg-195, Tyr-260, Tyr-350, and Arg-354 together coordinate RNA. Ntail stretches follow at residues 401-549 (LARG…DWDE) and 405-549 (RGAG…DWDE). 3 disordered regions span residues 409–428 (IPGG…QPAA), 437–467 (EESD…GQND), and 517–549 (NGDS…DWDE). Positions 412–428 (GPVNPFVPPVQQQQPAA) are enriched in low complexity. Acidic residues predominate over residues 437-447 (EESDDDGDEDG). Ser-439 is subject to Phosphoserine. Positions 452–465 (QNGAQAPAARQGGQ) are enriched in low complexity. Polar residues predominate over residues 531–549 (TFPNNPNQNAQSQVGDWDE).

This sequence belongs to the paramyxoviruses nucleocapsid family. In terms of assembly, homomultimer; forms the nucleocapsid. Binds to the viral genomic RNA. N0 interacts with the phosphoprotein (via N-terminus); this interaction allows P to chaperon N0 to avoid N polymerization before encapsidation. Interacts (via N-terminus) as N-RNA template with the phosphoprotein (via C-terminus); this interaction positions the polymerase on the template.

It localises to the virion. It is found in the host cytoplasm. Functionally, forms the helical nucleocapsid (NC) with 12.71 N subunits per helical turn and a rise of 5.3 Angstrom per N subunit, protecting the genome from nucleases. The encapsidated genomic RNA serves as template for transcription and replication; encapsidation by N is coupled to RNA synthesis. Forms the encapsidation complex with the phosphoprotein protein P. Before encapsidation, the newly synthesized free N protein, so-called N0, is chaperoned by P. The protein is Nucleoprotein (N) of Mumps virus genotype B (strain Miyahara vaccine) (MuV).